A 152-amino-acid chain; its full sequence is Small ribosomal subunit protein bS6 (152 aa).

Residues 96–152 (HEEGPSAMLQKRDRDDRGERGDRGDRGDRGDRGFGGREDRPRRPRPTEESHGGEEEV) are disordered.

Belongs to the bacterial ribosomal protein bS6 family.

Its function is as follows. Binds together with bS18 to 16S ribosomal RNA. This chain is Small ribosomal subunit protein bS6, found in Xanthobacter autotrophicus (strain ATCC BAA-1158 / Py2).